The primary structure comprises 1156 residues: Reverse gyrase 1 (1156 aa).

Residues 1–38 (MLKVYYTFGCPNCGGPIDDEHLLAGVPCSKCLPGRVEN) form an RG N-terminal-type zinc finger. Positions 10, 13, 28, and 31 each coordinate Zn(2+). ATP-binding positions include glutamine 86 and 103-110 (APTGLGKT). A Helicase ATP-binding domain is found at 90–277 (IKRLAKSESF…ALRTLIGFEP (188 aa)). The DEAD box motif lies at 184–187 (DDSD). Residues 570 to 1156 (INIKTILLIV…VNSLKLDTNV (587 aa)) form a topoisomerase I region. The Toprim domain occupies 574–736 (TILLIVESPT…NIYRIKYHEI (163 aa)). Glutamate 580 contributes to the Mg(2+) binding site. The segment at 655 to 682 (IYKCYNCGKTFTIKSNTCPYCGSVFISS) adopts an RG C-terminal-type zinc-finger fold. 4 residues coordinate Zn(2+): cysteine 658, cysteine 661, cysteine 672, and cysteine 675. Residue aspartate 705 coordinates Mg(2+). Residues 752-1143 (NMNLVKSQIV…DLHKEITQIS (392 aa)) enclose the Topo IA-type catalytic domain. The active-site O-(5'-phospho-DNA)-tyrosine intermediate is the tyrosine 895.

The protein in the N-terminal section; belongs to the DEAD box helicase family. DDVD subfamily. This sequence in the C-terminal section; belongs to the type IA topoisomerase family. In terms of assembly, monomer. Zn(2+) is required as a cofactor. Mg(2+) serves as cofactor.

The protein resides in the cytoplasm. The enzyme catalyses ATP + H2O = ADP + phosphate + H(+). In terms of biological role, modifies the topological state of DNA by introducing positive supercoils in an ATP-dependent process, increasing the linking number in steps of +1. Binds to single-stranded DNA, transiently cleaves and then rejoins the ends, introducing a positive supercoil in the process. The scissile phosphodiester is attacked by the catalytic tyrosine of the enzyme, resulting in the formation of a DNA-(5'-phosphotyrosyl)-enzyme intermediate. Probably involved in rewinding DNA strands in regions of the chromosome that have opened up to allow replication, transcription, DNA repair and/or for DNA protection. This is Reverse gyrase 1 from Sulfurisphaera tokodaii (strain DSM 16993 / JCM 10545 / NBRC 100140 / 7) (Sulfolobus tokodaii).